The sequence spans 317 residues: Apolipoprotein E (317 aa).

The N-terminal stretch at 1 to 18 is a signal peptide; it reads MKVLWAALLVTFLAGCQA. 8 tandem repeats follow at residues 80–101, 102–123, 124–145, 146–167, 168–189, 190–211, 212–233, and 234–255. Residues 80-255 form an 8 X 22 AA approximate tandem repeats region; it reads ALMDETMKEL…RLDEVKEQVA (176 aa). The residue at position 143 (Met-143) is a Methionine sulfoxide. Ser-147 bears the Phosphoserine mark. The interval 158-168 is LDL and other lipoprotein receptors binding; the sequence is HLRKLRKRLLR. 162–165 is a binding site for heparin; the sequence is LRKR. The lipid-binding and lipoprotein association stretch occupies residues 210–290; it reads AATVGSVAGK…SWFEPLVEDM (81 aa). 229 to 236 serves as a coordination point for heparin; the sequence is GERLRARM. Positions 266–317 are homooligomerization; sequence QQIRLQAEAFQARLKSWFEPLVEDMQRQWAGLVEKVQAAVGTSAAPVPSDNH. Positions 278-290 are specificity for association with VLDL; that stretch reads RLKSWFEPLVEDM.

It belongs to the apolipoprotein A1/A4/E family. In terms of assembly, homotetramer. May interact with ABCA1; functionally associated with ABCA1 in the biogenesis of HDLs. May interact with APP/A4 amyloid-beta peptide; the interaction is extremely stable in vitro but its physiological significance is unclear. May interact with MAPT. May interact with MAP2. In the cerebrospinal fluid, interacts with secreted SORL1. Interacts with PMEL; this allows the loading of PMEL luminal fragment on ILVs to induce fibril nucleation. APOE exists as multiple glycosylated and sialylated glycoforms within cells and in plasma. The extent of glycosylation and sialylation are tissue and context specific. In terms of processing, glycated in plasma VLDL. Post-translationally, phosphorylated by FAM20C in the extracellular medium.

It is found in the secreted. The protein localises to the extracellular space. Its subcellular location is the extracellular matrix. The protein resides in the extracellular vesicle. It localises to the endosome. It is found in the multivesicular body. Its function is as follows. APOE is an apolipoprotein, a protein associating with lipid particles, that mainly functions in lipoprotein-mediated lipid transport between organs via the plasma and interstitial fluids. APOE is a core component of plasma lipoproteins and is involved in their production, conversion and clearance. Apolipoproteins are amphipathic molecules that interact both with lipids of the lipoprotein particle core and the aqueous environment of the plasma. As such, APOE associates with chylomicrons, chylomicron remnants, very low density lipoproteins (VLDL) and intermediate density lipoproteins (IDL) but shows a preferential binding to high-density lipoproteins (HDL). It also binds a wide range of cellular receptors including the LDL receptor/LDLR, the LDL receptor-related proteins LRP1, LRP2 and LRP8 and the very low-density lipoprotein receptor/VLDLR that mediate the cellular uptake of the APOE-containing lipoprotein particles. Finally, APOE also has a heparin-binding activity and binds heparan-sulfate proteoglycans on the surface of cells, a property that supports the capture and the receptor-mediated uptake of APOE-containing lipoproteins by cells. A main function of APOE is to mediate lipoprotein clearance through the uptake of chylomicrons, VLDLs, and HDLs by hepatocytes. APOE is also involved in the biosynthesis by the liver of VLDLs as well as their uptake by peripheral tissues ensuring the delivery of triglycerides and energy storage in muscle, heart and adipose tissues. By participating in the lipoprotein-mediated distribution of lipids among tissues, APOE plays a critical role in plasma and tissues lipid homeostasis. APOE is also involved in two steps of reverse cholesterol transport, the HDLs-mediated transport of cholesterol from peripheral tissues to the liver, and thereby plays an important role in cholesterol homeostasis. First, it is functionally associated with ABCA1 in the biogenesis of HDLs in tissues. Second, it is enriched in circulating HDLs and mediates their uptake by hepatocytes. APOE also plays an important role in lipid transport in the central nervous system, regulating neuron survival and sprouting. This chain is Apolipoprotein E (APOE), found in Pongo pygmaeus (Bornean orangutan).